A 241-amino-acid polypeptide reads, in one-letter code: Phosphoribosylaminoimidazole-succinocarboxamide synthase (241 aa).

This sequence belongs to the SAICAR synthetase family.

It catalyses the reaction 5-amino-1-(5-phospho-D-ribosyl)imidazole-4-carboxylate + L-aspartate + ATP = (2S)-2-[5-amino-1-(5-phospho-beta-D-ribosyl)imidazole-4-carboxamido]succinate + ADP + phosphate + 2 H(+). It participates in purine metabolism; IMP biosynthesis via de novo pathway; 5-amino-1-(5-phospho-D-ribosyl)imidazole-4-carboxamide from 5-amino-1-(5-phospho-D-ribosyl)imidazole-4-carboxylate: step 1/2. The chain is Phosphoribosylaminoimidazole-succinocarboxamide synthase from Oenococcus oeni (strain ATCC BAA-331 / PSU-1).